A 248-amino-acid polypeptide reads, in one-letter code: DNA repair protein RecO (248 aa).

The protein belongs to the RecO family.

In terms of biological role, involved in DNA repair and RecF pathway recombination. This Bartonella tribocorum (strain CIP 105476 / IBS 506) protein is DNA repair protein RecO.